A 414-amino-acid polypeptide reads, in one-letter code: Transforming growth factor beta-2 proprotein (414 aa).

Residues 1–20 (MHYCVLSAFLLLHLVTVALS) form the signal peptide. Residues Asn-72, Asn-140, and Asn-241 are each glycosylated (N-linked (GlcNAc...) asparagine). Cystine bridges form between Cys-309–Cys-318, Cys-317–Cys-380, Cys-346–Cys-411, and Cys-350–Cys-413.

It belongs to the TGF-beta family. In terms of assembly, interacts with the serine proteases, HTRA1 and HTRA3. Interacts with ASPN. Interacts with MFAP5. As to quaternary structure, interacts with Transforming growth factor beta-2 (TGF-beta-2) chain; interaction is non-covalent and maintains (TGF-beta-2) in a latent state. Interacts with LRRC32/GARP; leading to regulate activation of TGF-beta-2. Interacts with NREP; the interaction results in a decrease in TGFB2 autoinduction. Transforming growth factor beta-2: Homodimer; disulfide-linked. Transforming growth factor beta-2: Interacts with TGF-beta receptors (TGFBR1 and TGFBR2), leading to signal transduction. Post-translationally, the precursor proprotein is cleaved in the Golgi apparatus to form Transforming growth factor beta-2 (TGF-beta-2) and Latency-associated peptide (LAP) chains, which remain non-covalently linked, rendering TGF-beta-2 inactive.

It is found in the secreted. The protein resides in the extracellular space. Its subcellular location is the extracellular matrix. In terms of biological role, precursor of the Latency-associated peptide (LAP) and Transforming growth factor beta-2 (TGF-beta-2) chains, which constitute the regulatory and active subunit of TGF-beta-2, respectively. Its function is as follows. Required to maintain the Transforming growth factor beta-2 (TGF-beta-2) chain in a latent state during storage in extracellular matrix. Associates non-covalently with TGF-beta-2 and regulates its activation via interaction with 'milieu molecules', such as LTBP1 and LRRC32/GARP, that control activation of TGF-beta-2. Multifunctional protein that regulates various processes such as angiogenesis and heart development. Activation into mature form follows different steps: following cleavage of the proprotein in the Golgi apparatus, Latency-associated peptide (LAP) and Transforming growth factor beta-2 (TGF-beta-2) chains remain non-covalently linked rendering TGF-beta-2 inactive during storage in extracellular matrix. At the same time, LAP chain interacts with 'milieu molecules', such as LTBP1 and LRRC32/GARP, that control activation of TGF-beta-2 and maintain it in a latent state during storage in extracellular milieus. Once activated following release of LAP, TGF-beta-2 acts by binding to TGF-beta receptors (TGFBR1 and TGFBR2), which transduce signal. The polypeptide is Transforming growth factor beta-2 proprotein (TGFB2) (Bos taurus (Bovine)).